A 267-amino-acid chain; its full sequence is Undecaprenyl-diphosphatase (267 aa).

8 consecutive transmembrane segments (helical) span residues 5-25, 45-65, 82-102, 108-128, 143-163, 183-203, 213-233, and 243-263; these read TIVA…PVSS, FEVL…AGRL, ILAV…AHRI, FETP…LLFV, FPLP…IPGV, AAEF…VYDL, AATG…VVVV, and YGYG…LLAL.

It belongs to the UppP family.

Its subcellular location is the cell inner membrane. It catalyses the reaction di-trans,octa-cis-undecaprenyl diphosphate + H2O = di-trans,octa-cis-undecaprenyl phosphate + phosphate + H(+). Its function is as follows. Catalyzes the dephosphorylation of undecaprenyl diphosphate (UPP). Confers resistance to bacitracin. This chain is Undecaprenyl-diphosphatase, found in Paracoccus denitrificans (strain Pd 1222).